Here is a 210-residue protein sequence, read N- to C-terminus: Large ribosomal subunit protein uL3 (210 aa).

The disordered stretch occupies residues 133 to 152 (ATHGNSLSHRVHGSTGQNQT). Residue Q151 is modified to N5-methylglutamine.

It belongs to the universal ribosomal protein uL3 family. In terms of assembly, part of the 50S ribosomal subunit. Forms a cluster with proteins L14 and L19. Methylated by PrmB.

Its function is as follows. One of the primary rRNA binding proteins, it binds directly near the 3'-end of the 23S rRNA, where it nucleates assembly of the 50S subunit. This Francisella tularensis subsp. holarctica (strain FTNF002-00 / FTA) protein is Large ribosomal subunit protein uL3.